The chain runs to 155 residues: Large ribosomal subunit protein uL13 (155 aa).

Belongs to the universal ribosomal protein uL13 family. As to quaternary structure, part of the 50S ribosomal subunit.

This protein is one of the early assembly proteins of the 50S ribosomal subunit, although it is not seen to bind rRNA by itself. It is important during the early stages of 50S assembly. The protein is Large ribosomal subunit protein uL13 of Rickettsia akari (strain Hartford).